Reading from the N-terminus, the 387-residue chain is Phosphoglycerate kinase (387 aa).

Residues 21–23, Arg-36, 59–62, Arg-113, and Arg-146 contribute to the substrate site; these read DLN and HLGR. ATP contacts are provided by residues Lys-197, Glu-314, and 340–343; that span reads GGDT.

The protein belongs to the phosphoglycerate kinase family. As to quaternary structure, monomer.

The protein resides in the cytoplasm. It catalyses the reaction (2R)-3-phosphoglycerate + ATP = (2R)-3-phospho-glyceroyl phosphate + ADP. It participates in carbohydrate degradation; glycolysis; pyruvate from D-glyceraldehyde 3-phosphate: step 2/5. The sequence is that of Phosphoglycerate kinase from Proteus mirabilis (strain HI4320).